Reading from the N-terminus, the 204-residue chain is Protease (204 aa).

Catalysis depends on residues His-53, Asp-70, and Cys-121.

Belongs to the peptidase C5 family. As to quaternary structure, interacts with protease cofactor pVI-C; this interaction is necessary for protease activation.

It localises to the virion. Its subcellular location is the host nucleus. The enzyme catalyses Cleaves proteins of the adenovirus and its host cell at two consensus sites: -Yaa-Xaa-Gly-Gly-|-Xaa- and -Yaa-Xaa-Gly-Xaa-|-Gly- (in which Yaa is Met, Ile or Leu, and Xaa is any amino acid).. Requires DNA and protease cofactor for maximal activation. Inside nascent virions, becomes partially activated by binding to the viral DNA, allowing it to cleave the cofactor that binds to the protease and fully activates it. Actin, like the viral protease cofactor, seems to act as a cofactor in the cleavage of cytokeratin 18 and of actin itself. Functionally, cleaves viral precursor proteins (pTP, pIIIa, pVI, pVII, pVIII, and pX) inside newly assembled particles giving rise to mature virions. Protease complexed to its cofactor slides along the viral DNA to specifically locate and cleave the viral precursors. Mature virions have a weakened organization compared to the unmature virions, thereby facilitating subsequent uncoating. Without maturation, the particle lacks infectivity and is unable to uncoat. Late in adenovirus infection, in the cytoplasm, may participate in the cytoskeleton destruction. Cleaves host cell cytoskeletal keratins K7 and K18. This is Protease from Porcine adenovirus A serotype 3 (PAdV-3).